A 292-amino-acid polypeptide reads, in one-letter code: Pyridoxal 5'-phosphate synthase subunit PdxS (292 aa).

Residue Asp22 coordinates D-ribose 5-phosphate. The active-site Schiff-base intermediate with D-ribose 5-phosphate is Lys79. Position 151 (Gly151) interacts with D-ribose 5-phosphate. Arg163 is a binding site for D-glyceraldehyde 3-phosphate. D-ribose 5-phosphate-binding positions include Gly212 and 233–234 (GS).

It belongs to the PdxS/SNZ family. In the presence of PdxT, forms a dodecamer of heterodimers.

The catalysed reaction is aldehydo-D-ribose 5-phosphate + D-glyceraldehyde 3-phosphate + L-glutamine = pyridoxal 5'-phosphate + L-glutamate + phosphate + 3 H2O + H(+). The protein operates within cofactor biosynthesis; pyridoxal 5'-phosphate biosynthesis. Functionally, catalyzes the formation of pyridoxal 5'-phosphate from ribose 5-phosphate (RBP), glyceraldehyde 3-phosphate (G3P) and ammonia. The ammonia is provided by the PdxT subunit. Can also use ribulose 5-phosphate and dihydroxyacetone phosphate as substrates, resulting from enzyme-catalyzed isomerization of RBP and G3P, respectively. The protein is Pyridoxal 5'-phosphate synthase subunit PdxS of Thermoanaerobacter pseudethanolicus (strain ATCC 33223 / 39E) (Clostridium thermohydrosulfuricum).